Consider the following 485-residue polypeptide: MSIRFESIEKLTELIKNKEIKPSDVVKDIYAAIEETDPTIKSFLALDKENAIKKAEELDELQAKDQMDGKLFGIPMGIKDNIITKDVETTCASKMLEGFVPIYESTVMNKLHDENAVLIGKLNMDEFAMGGSTETSYFKKTLNPFDHTAVPGGSSGGSAAAVAAGLVPFSLGSDTGGSIRQPASYCGVVGMKPTYGRVSRFGLVAFASSLDQIGPITRNVKDNALVLEAISGVDANDSTSAPVDDVDFTSDIGKDIKGLKIALPKEYLGEGVSEEVKTSVKEAVETLKSLGAEVDEVSLPNTKYGIPSYYVIASSEASANLARFDGIRYGYHSKEAQSLEELYKMSRSEGFGEEVKRRIFLGTFALSSGYYDAYYKKSQKVRTLIKNDFDKVFESYDVVVGPTAPTTAFNIGEEIDDPLTMYANDLLTTPVNLAGLPGISVPCGQSNGRPIGLQLIGKPFDEKTLYRVAYQFETQYNLHDAYENL.

Catalysis depends on charge relay system residues Lys79 and Ser154. Residue Ser178 is the Acyl-ester intermediate of the active site.

It belongs to the amidase family. GatA subfamily. Heterotrimer of A, B and C subunits.

The enzyme catalyses L-glutamyl-tRNA(Gln) + L-glutamine + ATP + H2O = L-glutaminyl-tRNA(Gln) + L-glutamate + ADP + phosphate + H(+). Its function is as follows. Allows the formation of correctly charged Gln-tRNA(Gln) through the transamidation of misacylated Glu-tRNA(Gln) in organisms which lack glutaminyl-tRNA synthetase. The reaction takes place in the presence of glutamine and ATP through an activated gamma-phospho-Glu-tRNA(Gln). This is Glutamyl-tRNA(Gln) amidotransferase subunit A from Staphylococcus epidermidis (strain ATCC 12228 / FDA PCI 1200).